A 285-amino-acid polypeptide reads, in one-letter code: Release factor glutamine methyltransferase (285 aa).

Residues 124-128, D147, and N190 contribute to the S-adenosyl-L-methionine site; that span reads GTGSG. 190–193 contacts substrate; that stretch reads NPPY.

The protein belongs to the protein N5-glutamine methyltransferase family. PrmC subfamily.

It carries out the reaction L-glutaminyl-[peptide chain release factor] + S-adenosyl-L-methionine = N(5)-methyl-L-glutaminyl-[peptide chain release factor] + S-adenosyl-L-homocysteine + H(+). In terms of biological role, methylates the class 1 translation termination release factors RF1/PrfA and RF2/PrfB on the glutamine residue of the universally conserved GGQ motif. This Flavobacterium psychrophilum (strain ATCC 49511 / DSM 21280 / CIP 103535 / JIP02/86) protein is Release factor glutamine methyltransferase.